Consider the following 237-residue polypeptide: Phosphoribosylaminoimidazole-succinocarboxamide synthase (237 aa).

The protein belongs to the SAICAR synthetase family.

It carries out the reaction 5-amino-1-(5-phospho-D-ribosyl)imidazole-4-carboxylate + L-aspartate + ATP = (2S)-2-[5-amino-1-(5-phospho-beta-D-ribosyl)imidazole-4-carboxamido]succinate + ADP + phosphate + 2 H(+). Its pathway is purine metabolism; IMP biosynthesis via de novo pathway; 5-amino-1-(5-phospho-D-ribosyl)imidazole-4-carboxamide from 5-amino-1-(5-phospho-D-ribosyl)imidazole-4-carboxylate: step 1/2. The chain is Phosphoribosylaminoimidazole-succinocarboxamide synthase from Yersinia pseudotuberculosis serotype O:1b (strain IP 31758).